The sequence spans 461 residues: PE-PGRS family protein PE_PGRS45 (461 aa).

The region spanning 4–92 (VNVAPQLVST…GSTYAVAEAA (89 aa)) is the PE domain. Disordered regions lie at residues 232–251 (GGAG…GGNG) and 426–461 (AGSL…GADG). Positions 434 to 446 (PGFGGPGGSGGAS) are enriched in gly residues.

The protein belongs to the mycobacterial PE family. PGRS subfamily. As to quaternary structure, interacts with human TIMM23, which is part of a complex that mediates the translocation of transit peptide-containing proteins across the mitochondrial inner membrane.

It localises to the cell membrane. Its subcellular location is the secreted. The protein resides in the cell wall. It is found in the host mitochondrion. It catalyses the reaction hexadecanal + NADP(+) + CoA = hexadecanoyl-CoA + NADPH + H(+). With respect to regulation, oxidoreductase activity is inhibited by the first line anti-tubercular drug isoniazid (INH). In terms of biological role, may be an effector protein that contributes to pathogenesis by targeting host mitochondria, where it modulates host cellular processes. In THP1 macrophages, increases the ADP-to-ATP ratio and increases the cellular ROS levels. Also induces mitochondrial perturbations through membrane depolarization, release of mitochondrial superoxide, up-regulation of expression of host proapoptotic proteins (BAX and BIM) and release of cytochrome C into the cytosol. May bind calcium to increase intracellular calcium influx, which may further lead to mitochondrial perturbations. Mitochondrial perturbations and alteration of Ca(2+) influx are independent but simultaneous events. In vitro, shows NADPH-dependent fatty acyl coenzyme A oxidoreductase activity. Can oxidize palmitoyl-CoA, but not glutathione and thiourea. This is PE-PGRS family protein PE_PGRS45 from Mycobacterium tuberculosis (strain ATCC 25618 / H37Rv).